The following is a 479-amino-acid chain: Serine carboxypeptidase-like 44 (479 aa).

A signal peptide spans 1–22; it reads MVGGKWRFLEVAVVVMVLQWSC. Cystine bridges form between C92-C352, C253-C270, and C295-C320. N143 carries N-linked (GlcNAc...) asparagine glycosylation. The active site involves S184. N265 carries an N-linked (GlcNAc...) asparagine glycan. Residue N341 is glycosylated (N-linked (GlcNAc...) asparagine). The active site involves D389. The N-linked (GlcNAc...) asparagine glycan is linked to N411. The active site involves H446.

The protein belongs to the peptidase S10 family. In terms of tissue distribution, expressed in seedlings.

It is found in the secreted. Its function is as follows. Probable carboxypeptidase. This is Serine carboxypeptidase-like 44 (SCPL44) from Arabidopsis thaliana (Mouse-ear cress).